The sequence spans 405 residues: Probable tRNA sulfurtransferase (405 aa).

The region spanning 60 to 165 (DKIDQRLKLV…QDAIYISNQL (106 aa)) is the THUMP domain. ATP-binding positions include 183 to 184 (ML), 208 to 209 (HF), Arg-265, Gly-287, and Gln-296.

It belongs to the ThiI family.

It is found in the cytoplasm. It carries out the reaction [ThiI sulfur-carrier protein]-S-sulfanyl-L-cysteine + a uridine in tRNA + 2 reduced [2Fe-2S]-[ferredoxin] + ATP + H(+) = [ThiI sulfur-carrier protein]-L-cysteine + a 4-thiouridine in tRNA + 2 oxidized [2Fe-2S]-[ferredoxin] + AMP + diphosphate. It catalyses the reaction [ThiS sulfur-carrier protein]-C-terminal Gly-Gly-AMP + S-sulfanyl-L-cysteinyl-[cysteine desulfurase] + AH2 = [ThiS sulfur-carrier protein]-C-terminal-Gly-aminoethanethioate + L-cysteinyl-[cysteine desulfurase] + A + AMP + 2 H(+). The protein operates within cofactor biosynthesis; thiamine diphosphate biosynthesis. In terms of biological role, catalyzes the ATP-dependent transfer of a sulfur to tRNA to produce 4-thiouridine in position 8 of tRNAs, which functions as a near-UV photosensor. Also catalyzes the transfer of sulfur to the sulfur carrier protein ThiS, forming ThiS-thiocarboxylate. This is a step in the synthesis of thiazole, in the thiamine biosynthesis pathway. The sulfur is donated as persulfide by IscS. This Lactobacillus gasseri (strain ATCC 33323 / DSM 20243 / BCRC 14619 / CIP 102991 / JCM 1131 / KCTC 3163 / NCIMB 11718 / NCTC 13722 / AM63) protein is Probable tRNA sulfurtransferase.